The sequence spans 293 residues: ELMO domain-containing protein 2 (293 aa).

In terms of domain architecture, ELMO spans 126–282 (QHEKMLLKLW…KFHERIKGLL (157 aa)).

In terms of biological role, acts as a GTPase-activating protein (GAP) toward guanine nucleotide exchange factors like ARL2, ARL3, ARF1 and ARF6, but not for GTPases outside the Arf family. The chain is ELMO domain-containing protein 2 (Elmod2) from Mus musculus (Mouse).